The following is a 95-amino-acid chain: Large ribosomal subunit protein uL23 (95 aa).

It belongs to the universal ribosomal protein uL23 family. Part of the 50S ribosomal subunit. Contacts protein L29.

Binds to 23S rRNA. One of the proteins that surrounds the polypeptide exit tunnel on the outside of the ribosome. The polypeptide is Large ribosomal subunit protein uL23 (Methanopyrus kandleri (strain AV19 / DSM 6324 / JCM 9639 / NBRC 100938)).